The following is a 261-amino-acid chain: Acyl-[acyl-carrier-protein]--UDP-N-acetylglucosamine O-acyltransferase (261 aa).

This sequence belongs to the transferase hexapeptide repeat family. LpxA subfamily. Homotrimer.

The protein resides in the cytoplasm. It catalyses the reaction a (3R)-hydroxyacyl-[ACP] + UDP-N-acetyl-alpha-D-glucosamine = a UDP-3-O-[(3R)-3-hydroxyacyl]-N-acetyl-alpha-D-glucosamine + holo-[ACP]. The protein operates within glycolipid biosynthesis; lipid IV(A) biosynthesis; lipid IV(A) from (3R)-3-hydroxytetradecanoyl-[acyl-carrier-protein] and UDP-N-acetyl-alpha-D-glucosamine: step 1/6. Involved in the biosynthesis of lipid A, a phosphorylated glycolipid that anchors the lipopolysaccharide to the outer membrane of the cell. This chain is Acyl-[acyl-carrier-protein]--UDP-N-acetylglucosamine O-acyltransferase, found in Paracoccus denitrificans (strain Pd 1222).